The primary structure comprises 293 residues: MANVTAALVKELRERTAAGMMDCKKALEEAAGDIELAIENMRKSGQAKAAKKAGRIAAEGVIFARTEGNVAVMIELNSETDFVAKDASFMAMGQKIADIAATQKIADVDALKAADFGNGESVELTITNLIAKIGENMNLRRVMLVEGDNLGTYVHGSRIGVITKLTGGTAELAKDLAMHVAANSPQFVKPEDVSAEVVAKEREIQIDIAINSGKPKDIAEKMVEGRMKKFTGEVSLTGQPFVKDPSMTVAELLKKEGADVVSFTRFEVGEGIEKQETDFAAEVAAQIAAAQKA.

The interval 80 to 83 is involved in Mg(2+) ion dislocation from EF-Tu; it reads TDFV.

Belongs to the EF-Ts family.

The protein resides in the cytoplasm. Its function is as follows. Associates with the EF-Tu.GDP complex and induces the exchange of GDP to GTP. It remains bound to the aminoacyl-tRNA.EF-Tu.GTP complex up to the GTP hydrolysis stage on the ribosome. This is Elongation factor Ts from Aeromonas salmonicida (strain A449).